The chain runs to 265 residues: Transcription factor LBX1b (265 aa).

The homeobox DNA-binding region spans 121-180; the sequence is RRKSRTAFTNHQLYELEKRFLHQKYLSPADRDQIAHQLGLTNAQVITWFQNRRAKLKRDL.

The protein resides in the nucleus. Functionally, transcription factor required for the development of hypaxial muscles. The sequence is that of Transcription factor LBX1b from Danio rerio (Zebrafish).